We begin with the raw amino-acid sequence, 442 residues long: tRNA modification GTPase MnmE (442 aa).

(6S)-5-formyl-5,6,7,8-tetrahydrofolate contacts are provided by arginine 21, glutamate 79, and lysine 118. A TrmE-type G domain is found at glycine 214–asparagine 367. Asparagine 224 lines the K(+) pocket. Residues asparagine 224 to serine 229, serine 243 to threonine 249, and aspartate 268 to glycine 271 each bind GTP. Serine 228 contributes to the Mg(2+) binding site. K(+)-binding residues include serine 243, isoleucine 245, and threonine 248. Threonine 249 contributes to the Mg(2+) binding site. A (6S)-5-formyl-5,6,7,8-tetrahydrofolate-binding site is contributed by lysine 442.

This sequence belongs to the TRAFAC class TrmE-Era-EngA-EngB-Septin-like GTPase superfamily. TrmE GTPase family. As to quaternary structure, homodimer. Heterotetramer of two MnmE and two MnmG subunits. It depends on K(+) as a cofactor.

Its subcellular location is the cytoplasm. Its function is as follows. Exhibits a very high intrinsic GTPase hydrolysis rate. Involved in the addition of a carboxymethylaminomethyl (cmnm) group at the wobble position (U34) of certain tRNAs, forming tRNA-cmnm(5)s(2)U34. In Campylobacter jejuni subsp. doylei (strain ATCC BAA-1458 / RM4099 / 269.97), this protein is tRNA modification GTPase MnmE.